We begin with the raw amino-acid sequence, 1444 residues long: DNA polymerase III PolC-type (1444 aa).

Residues 428–584 (YCVFDVETTG…FDAEATAYLA (157 aa)) enclose the Exonuclease domain.

This sequence belongs to the DNA polymerase type-C family. PolC subfamily.

Its subcellular location is the cytoplasm. The catalysed reaction is DNA(n) + a 2'-deoxyribonucleoside 5'-triphosphate = DNA(n+1) + diphosphate. In terms of biological role, required for replicative DNA synthesis. This DNA polymerase also exhibits 3' to 5' exonuclease activity. This is DNA polymerase III PolC-type from Listeria monocytogenes serovar 1/2a (strain ATCC BAA-679 / EGD-e).